Here is a 1827-residue protein sequence, read N- to C-terminus: Chromodomain-helicase-DNA-binding protein 2 (1827 aa).

The span at 1–14 (MMRNKDKSQEEDSS) shows a compositional bias: basic and acidic residues. The interval 1-264 (MMRNKDKSQE…EQQDNSETIE (264 aa)) is disordered. Over residues 15 to 75 (LHSNASSRSA…SESESAGSKS (61 aa)) the composition is skewed to low complexity. 3 stretches are compositionally biased toward basic and acidic residues: residues 81-101 (EAKEKPASKKERIADVKKMWE), 115-128 (SRQEPSRFNVKEEA), and 146-155 (KKQEKWKQDP). The segment covering 175 to 204 (GKARRPVPRRTVPKPQVKKQPKIQRGKRKK) has biased composition (basic residues). Ser207 and Ser208 each carry phosphoserine. Residues 234 to 258 (EDDDFETDSDDLIEMTGEGGDEQQD) are compositionally biased toward acidic residues. The residue at position 240 (Thr240) is a Phosphothreonine. Residue Ser242 is modified to Phosphoserine. Chromo domains lie at 261–353 (ETIE…QWLG) and 378–456 (QIVE…IPTR). In terms of domain architecture, Helicase ATP-binding spans 496-666 (AHSWCKSNSV…WSLLHFIMPE (171 aa)). Residue 509–516 (DEMGLGKT) coordinates ATP. Positions 617–620 (DEAH) match the DEAH box motif. The 152-residue stretch at 795–946 (LLDKLLTRLR…HLVIQRMDTT (152 aa)) folds into the Helicase C-terminal domain. Disordered regions lie at residues 1030-1124 (EDEE…RSVR), 1329-1465 (GTVA…DDLD), 1556-1638 (HKKR…ADRG), and 1679-1827 (HMDA…VRKT). The segment covering 1037 to 1065 (ERPHKDWDEIIPEEQRKKVEEEERQKELE) has biased composition (basic and acidic residues). Residues Ser1085, Ser1087, Ser1365, and Ser1386 each carry the phosphoserine modification. Basic and acidic residues predominate over residues 1347-1371 (KKENKAPRLKDEHGLEPASPRHSDN). 2 stretches are compositionally biased toward basic and acidic residues: residues 1396–1431 (ENKENKEKPVSSRKDREGDKERKKSKDKKEKVKGGD) and 1565–1574 (EQKKKDDSLG). The interval 1464–1566 (LDQETFSICK…KKRSQEEEEQ (103 aa)) is CHD1 helical C-terminal domain (CHCT). The segment covering 1584-1601 (SGSSRDSLISQSHTSHNL) has biased composition (polar residues). Basic and acidic residues-rich tracts occupy residues 1697 to 1719 (RPYEQYNSDRDHRGHRDYYDRHH), 1738 to 1748 (QDFRRMSDHRP), 1759 to 1771 (DHYRSFHTDKLGE), and 1794 to 1813 (SPHDSKSPLDHRSPLERSLE). At Ser1806 the chain carries Phosphoserine.

In terms of assembly, interacts with MYOD1. Interacts with histone H3.3. In terms of tissue distribution, widely expressed.

Its subcellular location is the nucleus. It carries out the reaction ATP + H2O = ADP + phosphate + H(+). Its function is as follows. ATP-dependent chromatin-remodeling factor that specifically binds to the promoter of target genes, leading to chromatin remodeling, possibly by promoting deposition of histone H3.3. Involved in myogenesis via interaction with MYOD1: binds to myogenic gene regulatory sequences and mediates incorporation of histone H3.3 prior to the onset of myogenic gene expression, promoting their expression. This Mus musculus (Mouse) protein is Chromodomain-helicase-DNA-binding protein 2 (Chd2).